The following is a 397-amino-acid chain: Elongation factor Tu (397 aa).

Residues 10-207 (KPHVNVGTIG…TLDTYIPEPV (198 aa)) enclose the tr-type G domain. The segment at 19 to 26 (GHVDHGKT) is G1. GTP is bound at residue 19–26 (GHVDHGKT). Residue Thr26 coordinates Mg(2+). Residues 60 to 64 (GITIN) are G2. The tract at residues 81–84 (DCPG) is G3. Residues 81–85 (DCPGH) and 136–139 (NKAD) each bind GTP. Residues 136–139 (NKAD) form a G4 region. The segment at 174-176 (SAL) is G5.

This sequence belongs to the TRAFAC class translation factor GTPase superfamily. Classic translation factor GTPase family. EF-Tu/EF-1A subfamily. In terms of assembly, monomer.

The protein localises to the cytoplasm. The enzyme catalyses GTP + H2O = GDP + phosphate + H(+). Functionally, GTP hydrolase that promotes the GTP-dependent binding of aminoacyl-tRNA to the A-site of ribosomes during protein biosynthesis. This is Elongation factor Tu from Ectopseudomonas mendocina (strain ymp) (Pseudomonas mendocina).